Here is a 179-residue protein sequence, read N- to C-terminus: ATP synthase subunit delta (179 aa).

This sequence belongs to the ATPase delta chain family. As to quaternary structure, F-type ATPases have 2 components, F(1) - the catalytic core - and F(0) - the membrane proton channel. F(1) has five subunits: alpha(3), beta(3), gamma(1), delta(1), epsilon(1). F(0) has three main subunits: a(1), b(2) and c(10-14). The alpha and beta chains form an alternating ring which encloses part of the gamma chain. F(1) is attached to F(0) by a central stalk formed by the gamma and epsilon chains, while a peripheral stalk is formed by the delta and b chains.

The protein localises to the cell membrane. Functionally, f(1)F(0) ATP synthase produces ATP from ADP in the presence of a proton or sodium gradient. F-type ATPases consist of two structural domains, F(1) containing the extramembraneous catalytic core and F(0) containing the membrane proton channel, linked together by a central stalk and a peripheral stalk. During catalysis, ATP synthesis in the catalytic domain of F(1) is coupled via a rotary mechanism of the central stalk subunits to proton translocation. Its function is as follows. This protein is part of the stalk that links CF(0) to CF(1). It either transmits conformational changes from CF(0) to CF(1) or is implicated in proton conduction. This is ATP synthase subunit delta from Clostridium botulinum (strain Okra / Type B1).